We begin with the raw amino-acid sequence, 166 residues long: Vasopressin-neurophysin 2-copeptin (166 aa).

The first 19 residues, 1–19 (MPDATLPACFLGLLALTSA), serve as a signal peptide directing secretion. A disulfide bridge connects residues Cys-20 and Cys-25. At Gly-28 the chain carries Glycine amide. Intrachain disulfides connect Cys-41-Cys-85, Cys-44-Cys-58, Cys-52-Cys-75, Cys-59-Cys-65, Cys-92-Cys-104, Cys-98-Cys-116, and Cys-105-Cys-110. Asn-133 carries an N-linked (GlcNAc...) asparagine glycan.

Belongs to the vasopressin/oxytocin family. In terms of assembly, interacts with vasopressin receptors V1bR/AVPR1B (Ki=85 pM), V1aR/AVPR1A (Ki=0.6 nM) and V2R/AVPR2 (Ki=4.9 nM). Interacts with oxytocin receptor (OXTR) (Ki=110 nM). In terms of processing, a shorter neurophysin molecule (32-123) is called neurophysin-I and is derived from the complete protein (called neurophysin III) by proteolytic degradation (in vivo or after extraction).

It localises to the secreted. Neurophysin 2 specifically binds vasopressin. Functionally, vasopressin has a direct antidiuretic action on the kidney, it also causes vasoconstriction of the peripheral vessels. Acts by binding to vasopressin receptors (V1bR/AVPR1B, V1aR/AVPR1A, and V2R/AVPR2). This Sus scrofa (Pig) protein is Vasopressin-neurophysin 2-copeptin (AVP).